The sequence spans 130 residues: Small ribosomal subunit protein uS9 (130 aa).

It belongs to the universal ribosomal protein uS9 family.

The sequence is that of Small ribosomal subunit protein uS9 from Geotalea daltonii (strain DSM 22248 / JCM 15807 / FRC-32) (Geobacter daltonii).